A 169-amino-acid chain; its full sequence is ALK and LTK ligand 2a (169 aa).

The signal sequence occupies residues 1-25 (MRALRAPVLVMGLVLLICTAAQSDA). Positions 45–68 (ENSADDESAQKTESAPEPKDTHHL) are disordered. A compositionally biased stretch (basic and acidic residues) spans 52–67 (SAQKTESAPEPKDTHH). 2 cysteine pairs are disulfide-bonded: C130–C166 and C144–C153.

This sequence belongs to the ALKAL family. As to quaternary structure, homodimer. As to expression, expressed at high level in the notochord and iridophore stripes of the trunk, as well as in the eye and swim bladder.

Its subcellular location is the secreted. It localises to the cell membrane. Functionally, cytokine that acts as a physiological ligand for receptor tyrosine kinases LTK and ALK. Required for neural crest cell differentiation and iridophore development during embryonic iridophore development and adult stripe development by acting as a receptor for LTK. This chain is ALK and LTK ligand 2a, found in Danio rerio (Zebrafish).